Here is a 1159-residue protein sequence, read N- to C-terminus: Anillin-like protein 1 (1159 aa).

Disordered stretches follow at residues 43–81 (VASPTKVFGSSSKCNDGPSTPVHFHPQEPKETTPNMKEN), 266–327 (QQVS…TKTT), 409–430 (KLKKSSSANVTAPPAPTSAPVP), 549–608 (AIPK…GDVI), and 629–699 (FGFM…KSSS). The segment covering 50-60 (FGSSSKCNDGP) has biased composition (polar residues). Over residues 287 to 327 (ASSATSSSSSTTTLTTISGASGSTTSGISNAPQDSASTKTT) the composition is skewed to low complexity. The segment covering 421-430 (PPAPTSAPVP) has biased composition (pro residues). Over residues 564–584 (SASSLYSQGARSNTASPASKS) the composition is skewed to polar residues. Over residues 660-684 (VIEEETENEDESEPYEPEEEEDDDA) the composition is skewed to acidic residues. Residues 1029–1147 (DITYHGFLSM…WLSLINSTSK (119 aa)) form the PH domain.

Strongly expressed in dividing neuroblasts under the ventral epidermal cells during ventral enclosure.

Its subcellular location is the cytoplasm. The protein localises to the cell cortex. It localises to the cytoskeleton. The protein resides in the spindle. It is found in the midbody. Its subcellular location is the cleavage furrow. Functionally, required for contractile events in embryos that occur prior to mitosis, such as cortical ruffling and pseudocleavage. Promotes membrane ruffling by organizing cortical patches of septins and myosin II. Not generally required for cytokinesis in mitotic cells. Required for the asymmetric cleavage events that extrude the two polar bodies during oocyte meiosis. Not required for meiotic contractile ring assembly, initiation or closure but is required for the transformation of the contractile ring from a disk above the spindle to a tube around the spindle midzone. Promotes astral microtubule-directed cortical myosin polarization and cleavage furrow ingression. Regulates neuroblast cytokinesis during mid- to late-embryogenesis and is required for ventral enclosure. This chain is Anillin-like protein 1 (ani-1), found in Caenorhabditis elegans.